The following is a 577-amino-acid chain: Serine/threonine-protein kinase AGC1-5 (577 aa).

Over residues 1-12 (MDLASKKNTANV) the composition is skewed to polar residues. The tract at residues 1–151 (MDLASKKNTA…DYAYGDNLVG (151 aa)) is disordered. The span at 44–55 (PHFDPKKMDPLV) shows a compositional bias: basic and acidic residues. Composition is skewed to polar residues over residues 69–87 (TRGTNSEGDLKHNTYSSDG) and 110–120 (LTTSETYSPSA). Residues 185–509 (FRLLKRLGYG…ATEIKQHPFF (325 aa)) enclose the Protein kinase domain. ATP is bound by residues 191-199 (LGYGDIGSV) and lysine 214. Aspartate 310 functions as the Proton acceptor in the catalytic mechanism. The region spanning 510-577 (EGVNWALVRS…DTAYIDFEYF (68 aa)) is the AGC-kinase C-terminal domain.

The protein belongs to the protein kinase superfamily. AGC Ser/Thr protein kinase family. Interacts with PDPK1/PDK1. In terms of processing, autophosphorylated and phosphorylated by PDPK1/PDK1. As to expression, specifically expressed in pollen grains.

The enzyme catalyses L-seryl-[protein] + ATP = O-phospho-L-seryl-[protein] + ADP + H(+). The catalysed reaction is L-threonyl-[protein] + ATP = O-phospho-L-threonyl-[protein] + ADP + H(+). Activated by PDPK1/PDK1. Functionally, functions redudantly with AGC1-7 as signaling component in the pollen tube. Required for polarized growth of pollen tubes. The chain is Serine/threonine-protein kinase AGC1-5 from Arabidopsis thaliana (Mouse-ear cress).